Here is a 118-residue protein sequence, read N- to C-terminus: UPF0148 protein M1627_1409 (118 aa).

Belongs to the UPF0148 family.

The polypeptide is UPF0148 protein M1627_1409 (Saccharolobus islandicus (strain M.16.27) (Sulfolobus islandicus)).